The sequence spans 614 residues: Elongation factor 4 (614 aa).

Positions 10-192 constitute a tr-type G domain; that stretch reads ALIRNFCIIA…EIVARIPPPV (183 aa). GTP-binding positions include 22 to 27 and 139 to 142; these read DHGKST and NKID.

Belongs to the TRAFAC class translation factor GTPase superfamily. Classic translation factor GTPase family. LepA subfamily.

Its subcellular location is the cell membrane. The enzyme catalyses GTP + H2O = GDP + phosphate + H(+). Functionally, required for accurate and efficient protein synthesis under certain stress conditions. May act as a fidelity factor of the translation reaction, by catalyzing a one-codon backward translocation of tRNAs on improperly translocated ribosomes. Back-translocation proceeds from a post-translocation (POST) complex to a pre-translocation (PRE) complex, thus giving elongation factor G a second chance to translocate the tRNAs correctly. Binds to ribosomes in a GTP-dependent manner. The polypeptide is Elongation factor 4 (Thermobifida fusca (strain YX)).